The following is a 105-amino-acid chain: Small ribosomal subunit protein uS10 (105 aa).

This sequence belongs to the universal ribosomal protein uS10 family. As to quaternary structure, part of the 30S ribosomal subunit.

In terms of biological role, involved in the binding of tRNA to the ribosomes. This Crocosphaera subtropica (strain ATCC 51142 / BH68) (Cyanothece sp. (strain ATCC 51142)) protein is Small ribosomal subunit protein uS10.